A 445-amino-acid chain; its full sequence is 26S proteasome regulatory subunit RPN5 (445 aa).

The residue at position 2 (Ser2) is an N-acetylserine. Positions Glu233–Asn407 constitute a PCI domain.

It belongs to the proteasome subunit p55 family. In terms of processing, N-acetylated by NAT1.

In terms of biological role, acts as a regulatory subunit of the 26S proteasome which is involved in the ATP-dependent degradation of ubiquitinated proteins. The chain is 26S proteasome regulatory subunit RPN5 (RPN5) from Saccharomyces cerevisiae (strain ATCC 204508 / S288c) (Baker's yeast).